A 102-amino-acid polypeptide reads, in one-letter code: Carboxysome shell protein CsoS1C (102 aa).

The 86-residue stretch at 8-93 (ALGMIETRGL…PHKEVEPVLA (86 aa)) folds into the BMC domain.

This sequence belongs to the bacterial microcompartments protein family. CsoS1 subfamily. As to quaternary structure, homohexamer with a small central pore.

It localises to the carboxysome. Its function is as follows. One of shell proteins of the carboxysome, a polyhedral inclusion where RuBisCO (ribulose bisphosphate carboxylase, ccbL-ccbS) is sequestered. Assembles into hexamers which make sheets that form the facets of the polyhedral carboxysome. The shell probably limits the diffusion of CO(2) into and out of the carboxysome. The sequence is that of Carboxysome shell protein CsoS1C from Hydrogenovibrio crunogenus (strain DSM 25203 / XCL-2) (Thiomicrospira crunogena).